Reading from the N-terminus, the 431-residue chain is Levansucrase LscC (431 aa).

Residues Trp61, Asp62, Ala148, Arg218, and Asp219 each coordinate sucrose. The active-site Nucleophile is Asp62. Glu303 serves as the catalytic Proton donor/acceptor.

This sequence belongs to the glycosyl hydrolase 68 family.

Its subcellular location is the periplasm. The catalysed reaction is [6)-beta-D-fructofuranosyl-(2-&gt;](n) alpha-D-glucopyranoside + sucrose = [6)-beta-D-fructofuranosyl-(2-&gt;](n+1) alpha-D-glucopyranoside + D-glucose. Functionally, catalyzes the synthesis of levan, a fructose polymer, by transferring the fructosyl moiety from sucrose to a growing acceptor molecule. The protein is Levansucrase LscC of Pseudomonas savastanoi pv. glycinea (Pseudomonas syringae pv. glycinea).